We begin with the raw amino-acid sequence, 539 residues long: Phosphoenolpyruvate carboxykinase (ATP) (539 aa).

Substrate contacts are provided by Arg-64, Tyr-206, and Lys-212. ATP-binding positions include Lys-212, His-231, and Gly-247–Thr-255. Mn(2+)-binding residues include Lys-212 and His-231. Asp-268 serves as a coordination point for Mn(2+). ATP contacts are provided by residues Glu-296, Arg-332, Arg-448–Ile-449, and Thr-454. Arg-332 serves as a coordination point for substrate.

This sequence belongs to the phosphoenolpyruvate carboxykinase (ATP) family. In terms of assembly, monomer. Mn(2+) is required as a cofactor.

Its subcellular location is the cytoplasm. The enzyme catalyses oxaloacetate + ATP = phosphoenolpyruvate + ADP + CO2. The protein operates within carbohydrate biosynthesis; gluconeogenesis. In terms of biological role, involved in the gluconeogenesis. Catalyzes the conversion of oxaloacetate (OAA) to phosphoenolpyruvate (PEP) through direct phosphoryl transfer between the nucleoside triphosphate and OAA. The sequence is that of Phosphoenolpyruvate carboxykinase (ATP) from Salmonella arizonae (strain ATCC BAA-731 / CDC346-86 / RSK2980).